A 354-amino-acid chain; its full sequence is Uroporphyrinogen decarboxylase (354 aa).

Residues 27-31 (RQAGR), Asp77, Tyr154, Thr209, and His327 contribute to the substrate site.

This sequence belongs to the uroporphyrinogen decarboxylase family. In terms of assembly, homodimer.

Its subcellular location is the cytoplasm. The catalysed reaction is uroporphyrinogen III + 4 H(+) = coproporphyrinogen III + 4 CO2. It functions in the pathway porphyrin-containing compound metabolism; protoporphyrin-IX biosynthesis; coproporphyrinogen-III from 5-aminolevulinate: step 4/4. In terms of biological role, catalyzes the decarboxylation of four acetate groups of uroporphyrinogen-III to yield coproporphyrinogen-III. The sequence is that of Uroporphyrinogen decarboxylase from Hydrogenovibrio crunogenus (strain DSM 25203 / XCL-2) (Thiomicrospira crunogena).